We begin with the raw amino-acid sequence, 324 residues long: MSVSAAVAAASTSRTLVLARRRSPPASRVAATSRGRPFSSGPHPLAVSPATRAPAMATDCAAAAAAAGSKKKKEVLIFDAEEDLAVSLAKYTAELSAKLAAERGAFTVVLSGGSLIKNIRKLAEPPYLDSVDWSKWHVFWVDERVVPKDHEDSNYKLALDGFLSKVPIPTGQVYAINDALSAEGAADDYETCLKQLVKNGVIAMSQSTGFPRFDVMLLGMGPDGHIASLFPGHPLVNENKKWVTYIKDSPKPPPERITFTFPVINSSAYVAMVVTGAGKAGAVQKALSDKQTSSDLLPVEMAVLQDGEFTWFTDKPAVSMLQNK.

Residues 1–61 constitute a chloroplast transit peptide; it reads MSVSAAVAAA…RAPAMATDCA (61 aa). Residues 20 to 43 are disordered; it reads RRRSPPASRVAATSRGRPFSSGPH. Over residues 24 to 34 the composition is skewed to low complexity; it reads PPASRVAATSR.

Belongs to the glucosamine/galactosamine-6-phosphate isomerase family. 6-phosphogluconolactonase subfamily.

Its subcellular location is the plastid. It is found in the chloroplast. The enzyme catalyses 6-phospho-D-glucono-1,5-lactone + H2O = 6-phospho-D-gluconate + H(+). Its pathway is carbohydrate degradation; pentose phosphate pathway; D-ribulose 5-phosphate from D-glucose 6-phosphate (oxidative stage): step 2/3. Functionally, hydrolysis of 6-phosphogluconolactone to 6-phosphogluconate. This Oryza sativa subsp. indica (Rice) protein is Probable 6-phosphogluconolactonase 4, chloroplastic.